Consider the following 327-residue polypeptide: cAMP-dependent protein kinase regulatory subunit (327 aa).

A disordered region spans residues 1 to 47 (MTNNISHNQKATEKVEAQNNNNITRKRRGAISSEPLGDKPATPLPNI). The interval 1–65 (MTNNISHNQK…RLEQALSNNI (65 aa)) is dimerization and phosphorylation. Positions 27-31 (RRGAI) match the Pseudophosphorylation motif motif. S32 is modified (phosphoserine). 3',5'-cyclic AMP is bound by residues 66–188 (MFSH…EKVS), E136, R145, 189–327 (ILRH…SQKS), E262, and R271.

It belongs to the cAMP-dependent kinase regulatory chain family. In Dictyostelium the holoenzyme is a dimer composed of a regulatory (R) and a catalytic (C) subunit. In the presence of cAMP it dissociates into the active C subunit and an R monomer. In other eukaryotes the holoenzyme is a tetramer composed of 2 regulatory (R) and 2 catalytic (C) subunits. In the presence of cAMP it dissociates into active monomeric C subunits and an R dimer. In terms of processing, the pseudophosphorylation site binds to the substrate-binding region of the catalytic chain but is not phosphorylated. The physiological significance of phosphorylations by other kinases is unclear.

In Dictyostelium discoideum (Social amoeba), this protein is cAMP-dependent protein kinase regulatory subunit (pkaR).